The sequence spans 567 residues: DNA-binding protein REPIN1 (567 aa).

A disordered region spans residues 17–52 (PRLLSGPSQESPQTLGKESRGLRQQGTSVAQSGAQA). Positions 22–50 (GPSQESPQTLGKESRGLRQQGTSVAQSGA) are enriched in polar residues. Ser27 bears the Phosphoserine mark. Thr30 is modified (phosphothreonine). Residue Lys33 is modified to N6-acetyllysine. Residues 57–79 (HRCAHCRRHFPGWVALWLHTRRC) form a C2H2-type 1; atypical zinc finger. 7 consecutive C2H2-type zinc fingers follow at residues 85 to 107 (LPCPECGRRFRHAPFLALHRQVH), 116 to 138 (FACHLCGQSFRGWVALVLHLRAH), 145 to 168 (IACPKCERRFWRRKQLRAHLRRCH), 177 to 199 (FICGNCGRSFAQWDQLVAHKRVH), 236 to 258 (FQCACCGKRFRHKPNLIAHRRVH), 264 to 286 (HQCPECGKRFTNKPYLTSHRRIH), and 292 to 314 (YPCKECGRRFRHKPNLLSHSKIH). N6-acetyllysine is present on Lys276. Positions 305–315 (PNLLSHSKIHK) are enriched in basic residues. The disordered stretch occupies residues 305-372 (PNLLSHSKIH…HPQDPIEAPP (68 aa)). Pro residues predominate over residues 345-362 (PAVPLKPAQEPPPGAPPE). C2H2-type zinc fingers lie at residues 375–397 (YSCDDCGRSFRLERFLRAHQRQH), 403–425 (FTCAECGKNFGKKTHLVAHSRVH), 431–453 (FACEECGRRFSQGSHLAAHRRDH), 459–481 (FVCPDCGKAFRHKPYLAAHRRIH), 487–509 (YVCPDCGKAFSQKSNLVSHRRIH), 515–537 (YACPDCDRSFSQKSNLITHRKSH), and 543–565 (FCCAICGQTFDDEERLLAHQKKH).

Homodimers and homomultimers. Found in a complex with RIP60 and RIP100. In terms of tissue distribution, expressed in adipose tissue and bone tissue.

Its subcellular location is the nucleus. It localises to the cytoplasm. The protein localises to the cytosol. Sequence-specific double-stranded DNA-binding protein. Binds ATT-rich and T-rich DNA sequences and facilitates DNA bending. May regulate the expression of genes involved in cellular fatty acid import, including SCARB1/CD36, and genes involved in lipid droplet formation. May regulate the expression of LCN2, and thereby influence iron metabolism and apoptosis-related pathways. May regulate the expression of genes involved in glucose transport. The chain is DNA-binding protein REPIN1 (REPIN1) from Homo sapiens (Human).